We begin with the raw amino-acid sequence, 139 residues long: Large ribosomal subunit protein bL17 (139 aa).

Belongs to the bacterial ribosomal protein bL17 family. Part of the 50S ribosomal subunit. Contacts protein L32.

The polypeptide is Large ribosomal subunit protein bL17 (Sphingopyxis alaskensis (strain DSM 13593 / LMG 18877 / RB2256) (Sphingomonas alaskensis)).